An 82-amino-acid polypeptide reads, in one-letter code: MVDINQIPTRRPFHRRHKTCPFSGANAPKIDYKDVKLLQRYISERGKIVPSRITAVSQKKQRELAKAIKRARFLGLLPYVVK.

The interval 1-20 (MVDINQIPTRRPFHRRHKTC) is disordered.

Belongs to the bacterial ribosomal protein bS18 family. As to quaternary structure, part of the 30S ribosomal subunit. Forms a tight heterodimer with protein bS6.

Its function is as follows. Binds as a heterodimer with protein bS6 to the central domain of the 16S rRNA, where it helps stabilize the platform of the 30S subunit. This Brucella suis (strain ATCC 23445 / NCTC 10510) protein is Small ribosomal subunit protein bS18.